We begin with the raw amino-acid sequence, 284 residues long: Glutamate 5-kinase 2 (284 aa).

Residue Lys26 participates in ATP binding. Residues Ser67, Asp154, and Asn166 each contribute to the substrate site. ATP-binding positions include 186-187 (SD) and 228-234 (SGGMVTK).

Belongs to the glutamate 5-kinase family.

The protein localises to the cytoplasm. It catalyses the reaction L-glutamate + ATP = L-glutamyl 5-phosphate + ADP. Its pathway is amino-acid biosynthesis; L-proline biosynthesis; L-glutamate 5-semialdehyde from L-glutamate: step 1/2. Functionally, catalyzes the transfer of a phosphate group to glutamate to form L-glutamate 5-phosphate. This is Glutamate 5-kinase 2 from Mesorhizobium japonicum (strain LMG 29417 / CECT 9101 / MAFF 303099) (Mesorhizobium loti (strain MAFF 303099)).